Reading from the N-terminus, the 319-residue chain is Methionyl-tRNA formyltransferase (319 aa).

Residue 112 to 115 (SLLP) participates in (6S)-5,6,7,8-tetrahydrofolate binding.

Belongs to the Fmt family.

The catalysed reaction is L-methionyl-tRNA(fMet) + (6R)-10-formyltetrahydrofolate = N-formyl-L-methionyl-tRNA(fMet) + (6S)-5,6,7,8-tetrahydrofolate + H(+). Attaches a formyl group to the free amino group of methionyl-tRNA(fMet). The formyl group appears to play a dual role in the initiator identity of N-formylmethionyl-tRNA by promoting its recognition by IF2 and preventing the misappropriation of this tRNA by the elongation apparatus. In Pelobacter propionicus (strain DSM 2379 / NBRC 103807 / OttBd1), this protein is Methionyl-tRNA formyltransferase.